We begin with the raw amino-acid sequence, 456 residues long: Adenylosuccinate synthetase (456 aa).

Residues 11-17 (GDEGKGG) and 39-41 (GHT) contribute to the GTP site. D12 acts as the Proton acceptor in catalysis. The Mg(2+) site is built by D12 and G39. IMP contacts are provided by residues 12 to 15 (DEGK), 37 to 40 (NAGH), T127, R141, Q232, T247, and R328. H40 acts as the Proton donor in catalysis. 324 to 330 (TVTGRPR) contacts substrate. GTP contacts are provided by residues R330, 356 to 358 (HLD), and 441 to 443 (GVG).

The protein belongs to the adenylosuccinate synthetase family. In terms of assembly, homodimer. Requires Mg(2+) as cofactor.

It localises to the cytoplasm. The catalysed reaction is IMP + L-aspartate + GTP = N(6)-(1,2-dicarboxyethyl)-AMP + GDP + phosphate + 2 H(+). It participates in purine metabolism; AMP biosynthesis via de novo pathway; AMP from IMP: step 1/2. In terms of biological role, plays an important role in the de novo pathway of purine nucleotide biosynthesis. Catalyzes the first committed step in the biosynthesis of AMP from IMP. The sequence is that of Adenylosuccinate synthetase from Natronomonas pharaonis (strain ATCC 35678 / DSM 2160 / CIP 103997 / JCM 8858 / NBRC 14720 / NCIMB 2260 / Gabara) (Halobacterium pharaonis).